A 468-amino-acid chain; its full sequence is MAAAHKVFELSHVFKDVSKIGDDESVCSPNEDYFGVPWKIVLRHKDEKMGVFLSCEKPSNNDAHCIVNVVYSVKLMSSSGVCYIKSDSKLFGEITEHGWVNFVNWNTMVDAFLIDDSIIIEVLVKTIFMSGLPKKSPKNFDESNKEFSDGIVVVKHQNFHILKKFLAFHCEYLEKLFFGDFKEAGKAEVTLKAISSTDFHYLLAVLYEDYAIDDDNVGGILRLASYLQVPIVIRKCEQFLIEGSGKPMEIRLDIAEKECLQNLKKHCLSKVGTADQIEAARAILPSDIPKRALKKFDESNKEFSDVIFVVEHNKFYVLKQILASHSSHFKKIFVENVDKREFTLADIDSNDFQNLVEVMYGVSFIDDLTVEGVLHLAHMYDRPFPMQKCVEFLIDLSEKSPKEKLKIAKAYQLKNLEKAALARINLPESIRAALSCDMAQMEVEVLKALMQKALFHLSDTKVHTETFF.

One can recognise an MATH domain in the interval 7-124; that stretch reads VFELSHVFKD…DDSIIIEVLV (118 aa). BTB domains lie at 148–215 and 304–368; these read SDGI…IDDD and SDVI…IDDL.

The chain is BTB and MATH domain-containing protein 45 (bath-45) from Caenorhabditis elegans.